We begin with the raw amino-acid sequence, 92 residues long: Small integral membrane protein 12 (92 aa).

Residues 15–34 (YVTFPVAFVVGAVGYHLEWF) form a helical membrane-spanning segment.

The protein belongs to the SMIM12 family.

The protein resides in the membrane. This Mus musculus (Mouse) protein is Small integral membrane protein 12 (Smim12).